The following is a 312-amino-acid chain: Lichenase-2 (312 aa).

An N-terminal signal peptide occupies residues 1–6 (PPSVES). The Proton donor role is filled by Glu-99. The N-linked (GlcNAc...) asparagine glycan is linked to Asn-196. The Nucleophile role is filled by Glu-238.

It belongs to the glycosyl hydrolase 17 family.

It catalyses the reaction Hydrolysis of (1-&gt;4)-beta-D-glucosidic linkages in beta-D-glucans containing (1-&gt;3)- and (1-&gt;4)-bonds.. Its pathway is glycan metabolism; beta-D-glucan degradation. Its function is as follows. Functions in plant cell wall hydrolysis during mobilization of the endosperm in germinating grain or during the growth of vegetative tissues. The sequence is that of Lichenase-2 from Hordeum vulgare (Barley).